The sequence spans 227 residues: Phosphoribosylaminoimidazole-succinocarboxamide synthase (227 aa).

It belongs to the SAICAR synthetase family.

It carries out the reaction 5-amino-1-(5-phospho-D-ribosyl)imidazole-4-carboxylate + L-aspartate + ATP = (2S)-2-[5-amino-1-(5-phospho-beta-D-ribosyl)imidazole-4-carboxamido]succinate + ADP + phosphate + 2 H(+). Its pathway is purine metabolism; IMP biosynthesis via de novo pathway; 5-amino-1-(5-phospho-D-ribosyl)imidazole-4-carboxamide from 5-amino-1-(5-phospho-D-ribosyl)imidazole-4-carboxylate: step 1/2. This Clostridium tetani (strain Massachusetts / E88) protein is Phosphoribosylaminoimidazole-succinocarboxamide synthase.